We begin with the raw amino-acid sequence, 401 residues long: Imidazolonepropionase (401 aa).

Fe(3+)-binding residues include histidine 66 and histidine 68. Positions 66 and 68 each coordinate Zn(2+). The 4-imidazolone-5-propanoate site is built by arginine 75, tyrosine 138, and histidine 171. Tyrosine 138 provides a ligand contact to N-formimidoyl-L-glutamate. Histidine 236 serves as a coordination point for Fe(3+). Histidine 236 contributes to the Zn(2+) binding site. A 4-imidazolone-5-propanoate-binding site is contributed by glutamine 239. Aspartate 311 lines the Fe(3+) pocket. Aspartate 311 serves as a coordination point for Zn(2+). Asparagine 313 and glycine 315 together coordinate N-formimidoyl-L-glutamate. Threonine 316 serves as a coordination point for 4-imidazolone-5-propanoate.

This sequence belongs to the metallo-dependent hydrolases superfamily. HutI family. It depends on Zn(2+) as a cofactor. Fe(3+) serves as cofactor.

Its subcellular location is the cytoplasm. It catalyses the reaction 4-imidazolone-5-propanoate + H2O = N-formimidoyl-L-glutamate. It participates in amino-acid degradation; L-histidine degradation into L-glutamate; N-formimidoyl-L-glutamate from L-histidine: step 3/3. Catalyzes the hydrolytic cleavage of the carbon-nitrogen bond in imidazolone-5-propanoate to yield N-formimidoyl-L-glutamate. It is the third step in the universal histidine degradation pathway. This is Imidazolonepropionase from Pseudomonas putida (strain ATCC 47054 / DSM 6125 / CFBP 8728 / NCIMB 11950 / KT2440).